Here is a 117-residue protein sequence, read N- to C-terminus: Large ribosomal subunit protein bL19 (117 aa).

Belongs to the bacterial ribosomal protein bL19 family.

In terms of biological role, this protein is located at the 30S-50S ribosomal subunit interface and may play a role in the structure and function of the aminoacyl-tRNA binding site. This is Large ribosomal subunit protein bL19 from Exiguobacterium sp. (strain ATCC BAA-1283 / AT1b).